The following is a 20-amino-acid chain: Flagellar filament 33 kDa core protein (20 aa).

It belongs to the bacterial flagellin family. As to quaternary structure, the flagellum consists of an outer layer composed of repeating units of FlaA around a core that contains one or all of five antigenically related polypeptides.

The protein resides in the periplasmic flagellum. It is found in the periplasm. In terms of biological role, component of the core of the flagella. This chain is Flagellar filament 33 kDa core protein, found in Spirochaeta aurantia.